The primary structure comprises 354 residues: Ornithine transcarbamylase, mitochondrial (354 aa).

The N-terminal 32 residues, 1 to 32 (MLSNLRILLNNAALRKGHTSVVRHFWCGKPVQ), are a transit peptide targeting the mitochondrion. Lys-70 is subject to N6-acetyllysine; alternate. The residue at position 70 (Lys-70) is an N6-succinyllysine; alternate. The residue at position 80 (Lys-80) is an N6-succinyllysine. At Lys-88 the chain carries N6-acetyllysine; alternate. N6-succinyllysine; alternate is present on Lys-88. 90-94 (STRTR) contacts carbamoyl phosphate. A Phosphoserine modification is found at Ser-133. Arg-141 provides a ligand contact to carbamoyl phosphate. Arg-141 contacts L-ornithine. Lys-144 is modified (N6-acetyllysine; alternate). The residue at position 144 (Lys-144) is an N6-succinyllysine; alternate. His-168 provides a ligand contact to carbamoyl phosphate. Asn-199 lines the L-ornithine pocket. An N6-acetyllysine; alternate mark is found at Lys-221, Lys-231, and Lys-238. 3 positions are modified to N6-succinyllysine; alternate: Lys-221, Lys-231, and Lys-238. Lys-243 is modified (N6-acetyllysine). 263–267 (DTWIS) contacts L-ornithine. An N6-succinyllysine mark is found at Lys-274 and Lys-289. Lys-292 is subject to N6-acetyllysine; alternate. Lys-292 is modified (N6-succinyllysine; alternate). Residue 302–305 (HCLP) participates in L-ornithine binding. The active site involves Cys-303. Lys-307 bears the N6-acetyllysine; alternate mark. N6-succinyllysine; alternate is present on Lys-307. Arg-330 is a carbamoyl phosphate binding site. Arg-330 contacts L-ornithine.

The protein belongs to the aspartate/ornithine carbamoyltransferase superfamily. OTCase family. In terms of assembly, homotrimer. Acetylation at Lys-88 negatively regulates ornithine carbamoyltransferase activity in response to nutrient signals.

It localises to the mitochondrion matrix. It catalyses the reaction carbamoyl phosphate + L-ornithine = L-citrulline + phosphate + H(+). The protein operates within nitrogen metabolism; urea cycle; L-citrulline from L-ornithine and carbamoyl phosphate: step 1/1. With respect to regulation, negatively regulated by lysine acetylation. In terms of biological role, catalyzes the second step of the urea cycle, the condensation of carbamoyl phosphate with L-ornithine to form L-citrulline. The urea cycle ensures the detoxification of ammonia by converting it to urea for excretion. This is Ornithine transcarbamylase, mitochondrial from Mus musculus (Mouse).